Here is a 261-residue protein sequence, read N- to C-terminus: Glucose 1-dehydrogenase (261 aa).

Residue 11 to 35 (VITGSSTGLGKSMAIRFATEKAKVV) coordinates NADP(+). Serine 145 provides a ligand contact to substrate. Residue tyrosine 158 is the Proton acceptor of the active site.

Belongs to the short-chain dehydrogenases/reductases (SDR) family. As to quaternary structure, homotetramer.

It catalyses the reaction D-glucose + NAD(+) = D-glucono-1,5-lactone + NADH + H(+). The enzyme catalyses D-glucose + NADP(+) = D-glucono-1,5-lactone + NADPH + H(+). In Priestia megaterium (Bacillus megaterium), this protein is Glucose 1-dehydrogenase.